We begin with the raw amino-acid sequence, 305 residues long: Formamidopyrimidine-DNA glycosylase (305 aa).

Residue P2 is the Schiff-base intermediate with DNA of the active site. E3 functions as the Proton donor in the catalytic mechanism. Catalysis depends on K59, which acts as the Proton donor; for beta-elimination activity. Residues H92, R111, and R154 each contribute to the DNA site. The FPG-type zinc-finger motif lies at 239–273 (QVFDRAGEPCPVCGTPIRKVAVAQRGTHFCPRCQP). R263 acts as the Proton donor; for delta-elimination activity in catalysis. Residues 282-305 (PRRARPGRRGNSVRVAAEPPGTYE) are disordered.

It belongs to the FPG family. As to quaternary structure, monomer. Zn(2+) is required as a cofactor.

The enzyme catalyses Hydrolysis of DNA containing ring-opened 7-methylguanine residues, releasing 2,6-diamino-4-hydroxy-5-(N-methyl)formamidopyrimidine.. It catalyses the reaction 2'-deoxyribonucleotide-(2'-deoxyribose 5'-phosphate)-2'-deoxyribonucleotide-DNA = a 3'-end 2'-deoxyribonucleotide-(2,3-dehydro-2,3-deoxyribose 5'-phosphate)-DNA + a 5'-end 5'-phospho-2'-deoxyribonucleoside-DNA + H(+). Functionally, involved in base excision repair of DNA damaged by oxidation or by mutagenic agents. Acts as a DNA glycosylase that recognizes and removes damaged bases. Has a preference for oxidized purines, such as 7,8-dihydro-8-oxoguanine (8-oxoG). Has AP (apurinic/apyrimidinic) lyase activity and introduces nicks in the DNA strand. Cleaves the DNA backbone by beta-delta elimination to generate a single-strand break at the site of the removed base with both 3'- and 5'-phosphates. The chain is Formamidopyrimidine-DNA glycosylase from Symbiobacterium thermophilum (strain DSM 24528 / JCM 14929 / IAM 14863 / T).